Reading from the N-terminus, the 267-residue chain is Trehalose 2-sulfotransferase (267 aa).

Alpha,alpha-trehalose is bound by residues Gln14, 33–39 (EPQEFFQ), Pro48, and Trp53. Glu36 functions as the Proton acceptor in the catalytic mechanism.

The protein belongs to the Stf0 sulfotransferase family. In terms of assembly, homodimer.

It catalyses the reaction alpha,alpha-trehalose + 3'-phosphoadenylyl sulfate = 2-O-sulfo-alpha,alpha-trehalose + adenosine 3',5'-bisphosphate + H(+). It participates in glycolipid metabolism. In terms of biological role, catalyzes the sulfuryl group transfer from 3'-phosphoadenosine-5'-phosphosulfate (PAPS) to trehalose, leading to trehalose-2-sulfate (T2S). The sulfation of trehalose is the first step in the biosynthesis of sulfolipid-1 (SL-1), a major cell wall glycolipid and the most abundant sulfated metabolite found in Mycobacterium tuberculosis, that is a potential virulence factor thought to mediate host-pathogen interactions. This is Trehalose 2-sulfotransferase from Mycobacterium tuberculosis (strain ATCC 35801 / TMC 107 / Erdman).